The following is a 156-amino-acid chain: Small ribosomal subunit protein uS7c (156 aa).

Belongs to the universal ribosomal protein uS7 family. Part of the 30S ribosomal subunit.

It localises to the plastid. Its function is as follows. One of the primary rRNA binding proteins, it binds directly to 16S rRNA where it nucleates assembly of the head domain of the 30S subunit. The polypeptide is Small ribosomal subunit protein uS7c (rps7) (Prototheca wickerhamii).